Here is a 209-residue protein sequence, read N- to C-terminus: Orotate phosphoribosyltransferase (209 aa).

5-phospho-alpha-D-ribose 1-diphosphate is bound by residues R96, K100, H102, and 122–130 (EDLISTGGS). S126 serves as a coordination point for orotate.

The protein belongs to the purine/pyrimidine phosphoribosyltransferase family. PyrE subfamily. As to quaternary structure, homodimer. The cofactor is Mg(2+).

The enzyme catalyses orotidine 5'-phosphate + diphosphate = orotate + 5-phospho-alpha-D-ribose 1-diphosphate. Its pathway is pyrimidine metabolism; UMP biosynthesis via de novo pathway; UMP from orotate: step 1/2. In terms of biological role, catalyzes the transfer of a ribosyl phosphate group from 5-phosphoribose 1-diphosphate to orotate, leading to the formation of orotidine monophosphate (OMP). This chain is Orotate phosphoribosyltransferase, found in Listeria monocytogenes serovar 1/2a (strain ATCC BAA-679 / EGD-e).